Consider the following 446-residue polypeptide: WD repeat domain phosphoinositide-interacting protein 1 (446 aa).

WD repeat units follow at residues 3-42, 47-88, 92-126, 131-173, 177-216, 222-261, and 304-343; these read AEAA…LFSL, QLDQ…VYHF, TEIC…IHNI, LLKT…LYDG, KTVC…VFSV, LYEF…IFKL, and FATA…MYNL. The short motif at 131–136 is the Nuclear receptor interaction element; sequence LLKTLL. A L/FRRG motif motif is present at residues 225-228; the sequence is FRRG. Residues 386–406 are disordered; the sequence is ARPSASSASTVPGYSEDGGAL.

The protein belongs to the WD repeat PROPPIN family. As to quaternary structure, interacts with androgen receptor (AR) and the estrogen receptors ESR1 and ESR2. Interacts with WIPI2. Interacts with WDR45. Interacts with ATG16L1. May interact with NUDC. In terms of tissue distribution, ubiquitously expressed. Highly expressed in skeletal muscle, heart, testis, pancreas and placenta. Highly expressed in G361, Sk-mel-28, Sk-mel-13, WM852 and WM451 cells. Up-regulated in a variety of tumor tissues.

The protein localises to the golgi apparatus. Its subcellular location is the trans-Golgi network. It is found in the endosome. It localises to the cytoplasmic vesicle. The protein resides in the clathrin-coated vesicle. The protein localises to the preautophagosomal structure membrane. Its subcellular location is the cytoplasm. It is found in the cytoskeleton. Functionally, component of the autophagy machinery that controls the major intracellular degradation process by which cytoplasmic materials are packaged into autophagosomes and delivered to lysosomes for degradation. Plays an important role in starvation- and calcium-mediated autophagy, as well as in mitophagy. Functions downstream of the ULK1 and PI3-kinases that produce phosphatidylinositol 3-phosphate (PtdIns3P) on membranes of the endoplasmic reticulum once activated. Binds phosphatidylinositol 3-phosphate (PtdIns3P), and maybe other phosphoinositides including PtdIns3,5P2 and PtdIns5P, and is recruited to phagophore assembly sites at the endoplasmic reticulum membranes. There, it assists WIPI2 in the recruitment of ATG12-ATG5-ATG16L1, a complex that directly controls the elongation of the nascent autophagosomal membrane. Together with WDR45/WIPI4, promotes ATG2 (ATG2A or ATG2B)-mediated lipid transfer by enhancing ATG2-association with phosphatidylinositol 3-monophosphate (PI3P)-containing membranes. Involved in xenophagy of Staphylococcus aureus. Invading S.aureus cells become entrapped in autophagosome-like WIPI1 positive vesicles targeted for lysosomal degradation. Also plays a distinct role in controlling the transcription of melanogenic enzymes and melanosome maturation, a process that is distinct from starvation-induced autophagy. May also regulate the trafficking of proteins involved in the mannose-6-phosphate receptor (MPR) recycling pathway. This chain is WD repeat domain phosphoinositide-interacting protein 1 (WIPI1), found in Homo sapiens (Human).